Consider the following 281-residue polypeptide: Nucleotide-binding protein TRQ2_1124 (281 aa).

An ATP-binding site is contributed by 9-16 (GLSGAGKT). 58-61 (DVRS) serves as a coordination point for GTP.

This sequence belongs to the RapZ-like family.

Displays ATPase and GTPase activities. The protein is Nucleotide-binding protein TRQ2_1124 of Thermotoga sp. (strain RQ2).